A 600-amino-acid polypeptide reads, in one-letter code: Aspartate--tRNA(Asp/Asn) ligase (600 aa).

Glutamate 175 is an L-aspartate binding site. The interval 199-202 is aspartate; the sequence is QLFK. Residue arginine 221 coordinates L-aspartate. Residues 221-223 and glutamine 230 each bind ATP; that span reads RDE. Position 453 (histidine 453) interacts with L-aspartate. Residue glutamate 487 participates in ATP binding. Arginine 494 contributes to the L-aspartate binding site. Residue 539 to 542 participates in ATP binding; the sequence is GWDR. The interval 578-600 is disordered; it reads AAQRKESGIDFKPKKGPQGQKEK. A compositionally biased stretch (basic and acidic residues) spans 580–590; it reads QRKESGIDFKP.

Belongs to the class-II aminoacyl-tRNA synthetase family. Type 1 subfamily. Homodimer.

The protein resides in the cytoplasm. It carries out the reaction tRNA(Asx) + L-aspartate + ATP = L-aspartyl-tRNA(Asx) + AMP + diphosphate. Aspartyl-tRNA synthetase with relaxed tRNA specificity since it is able to aspartylate not only its cognate tRNA(Asp) but also tRNA(Asn). Reaction proceeds in two steps: L-aspartate is first activated by ATP to form Asp-AMP and then transferred to the acceptor end of tRNA(Asp/Asn). This chain is Aspartate--tRNA(Asp/Asn) ligase, found in Corynebacterium jeikeium (strain K411).